The sequence spans 214 residues: MTHETTTLISLKEAMKRVDNKLRALDTQFKELDVTKDNLTLRFEHHSKTLASQAAQDEIWTAALALGFTSMELNIVYSYVIEVLICLHTRMLQKLPDLVRSLPTLASVLRRKAKNKHVRLVWESVLQEYGLQERDVSALCTFFIVHGNKGEHYAANVRRMYIKDVSFMITNMVKNQALQDGLLRAVQIIEKGKQAQDPENSRAPLKELMPPVKD.

Residues Thr-5–Thr-40 are a coiled coil. The helical transmembrane segment at Ile-59–Ile-81 threads the bilayer. The tract at residues Lys-193 to Asp-214 is disordered.

Its subcellular location is the membrane. This chain is Single-pass membrane and coiled-coil domain-containing protein 1 (Smco1), found in Mus musculus (Mouse).